The primary structure comprises 365 residues: Aminomethyltransferase (365 aa).

Belongs to the GcvT family. In terms of assembly, the glycine cleavage system is composed of four proteins: P, T, L and H.

The catalysed reaction is N(6)-[(R)-S(8)-aminomethyldihydrolipoyl]-L-lysyl-[protein] + (6S)-5,6,7,8-tetrahydrofolate = N(6)-[(R)-dihydrolipoyl]-L-lysyl-[protein] + (6R)-5,10-methylene-5,6,7,8-tetrahydrofolate + NH4(+). In terms of biological role, the glycine cleavage system catalyzes the degradation of glycine. The protein is Aminomethyltransferase of Frankia alni (strain DSM 45986 / CECT 9034 / ACN14a).